Consider the following 242-residue polypeptide: Ubiquinone biosynthesis O-methyltransferase (242 aa).

The S-adenosyl-L-methionine site is built by R44, G64, D85, and M129.

The protein belongs to the methyltransferase superfamily. UbiG/COQ3 family.

It catalyses the reaction a 3-demethylubiquinol + S-adenosyl-L-methionine = a ubiquinol + S-adenosyl-L-homocysteine + H(+). It carries out the reaction a 3-(all-trans-polyprenyl)benzene-1,2-diol + S-adenosyl-L-methionine = a 2-methoxy-6-(all-trans-polyprenyl)phenol + S-adenosyl-L-homocysteine + H(+). Its pathway is cofactor biosynthesis; ubiquinone biosynthesis. O-methyltransferase that catalyzes the 2 O-methylation steps in the ubiquinone biosynthetic pathway. The sequence is that of Ubiquinone biosynthesis O-methyltransferase from Citrobacter koseri (strain ATCC BAA-895 / CDC 4225-83 / SGSC4696).